We begin with the raw amino-acid sequence, 484 residues long: Adenylosuccinate synthetase, chloroplastic (484 aa).

Residues 1–44 (MSLSTLSHPAAAAAGSGKSLFPAGPAAQSVHFPKARLPVPAAVS) constitute a chloroplast transit peptide. Residues 71 to 77 (GDEGKGK) and 99 to 101 (GHT) each bind GTP. Residue Asp-72 is the Proton acceptor of the active site. 2 residues coordinate Mg(2+): Asp-72 and Gly-99. IMP-binding positions include 72–75 (DEGK), 97–100 (NAGH), Thr-189, Arg-203, Gln-283, Thr-298, and Arg-362. Residue His-100 is the Proton donor of the active site. 358 to 364 (TTTGRPR) serves as a coordination point for substrate. GTP is bound by residues Arg-364, 390–392 (KLD), and 473–475 (GVG).

The protein belongs to the adenylosuccinate synthetase family. As to quaternary structure, homodimer. Requires Mg(2+) as cofactor.

The protein localises to the plastid. It is found in the chloroplast. The catalysed reaction is IMP + L-aspartate + GTP = N(6)-(1,2-dicarboxyethyl)-AMP + GDP + phosphate + 2 H(+). The protein operates within purine metabolism; AMP biosynthesis via de novo pathway; AMP from IMP: step 1/2. Its function is as follows. Plays an important role in the de novo pathway and in the salvage pathway of purine nucleotide biosynthesis. Catalyzes the first committed step in the biosynthesis of AMP from IMP. This is Adenylosuccinate synthetase, chloroplastic from Zea mays (Maize).